Here is a 505-residue protein sequence, read N- to C-terminus: Maturase K (505 aa).

This sequence belongs to the intron maturase 2 family. MatK subfamily.

It localises to the plastid. Its subcellular location is the chloroplast. Its function is as follows. Usually encoded in the trnK tRNA gene intron. Probably assists in splicing its own and other chloroplast group II introns. This chain is Maturase K, found in Morus alba (White mulberry).